Here is a 404-residue protein sequence, read N- to C-terminus: Argininosuccinate synthase (404 aa).

15 to 23 (AYSGGLDTS) contacts ATP. Residue Tyr-94 participates in L-citrulline binding. ATP is bound at residue Gly-124. L-aspartate contacts are provided by Thr-126, Asn-130, and Asp-131. Asn-130 provides a ligand contact to L-citrulline. 4 residues coordinate L-citrulline: Arg-134, Ser-182, Glu-266, and Tyr-278.

The protein belongs to the argininosuccinate synthase family. Type 1 subfamily. Homotetramer.

It is found in the cytoplasm. It catalyses the reaction L-citrulline + L-aspartate + ATP = 2-(N(omega)-L-arginino)succinate + AMP + diphosphate + H(+). The protein operates within amino-acid biosynthesis; L-arginine biosynthesis; L-arginine from L-ornithine and carbamoyl phosphate: step 2/3. This is Argininosuccinate synthase from Streptomyces avermitilis (strain ATCC 31267 / DSM 46492 / JCM 5070 / NBRC 14893 / NCIMB 12804 / NRRL 8165 / MA-4680).